Reading from the N-terminus, the 247-residue chain is Ribosomal RNA small subunit methyltransferase G (247 aa).

S-adenosyl-L-methionine-binding positions include glycine 84, phenylalanine 89, 136–137, and arginine 155; that span reads AE.

Belongs to the methyltransferase superfamily. RNA methyltransferase RsmG family.

It is found in the cytoplasm. In terms of biological role, specifically methylates the N7 position of a guanine in 16S rRNA. The sequence is that of Ribosomal RNA small subunit methyltransferase G from Prochlorococcus marinus (strain MIT 9303).